The primary structure comprises 263 residues: Interleukin-22 receptor subunit alpha-2 (263 aa).

The signal sequence occupies residues 1-21; sequence MMPKHCFLGFLISFFLTGVAG. 3 consecutive Fibronectin type-III domains span residues 26–68, 100–161, and 162–263; these read HESL…KIMF, GQRQ…TKID, and PPVM…VEIP. N-linked (GlcNAc...) asparagine glycosylation is present at N56. Cysteines 110 and 118 form a disulfide. Residues N166, N171, N192, and N209 are each glycosylated (N-linked (GlcNAc...) asparagine). Residues C238 and C259 are joined by a disulfide bond.

Belongs to the type II cytokine receptor family. Expressed in placenta, spleen, breast, skin and lung. Also detected in intestinal tract, testis, brain, heart and thymus. No expression found in prostate, bladder, kidney, ovary, muscle, bone marrow, liver and uterus. Isoform 1 is expressed only in placenta. Isoform 2 is expressed in placenta and breast and at lower level in spleen, skin, thymus and stomach.

Its subcellular location is the secreted. Functionally, isoform 2 is a receptor for IL22. Binds to IL22, prevents interaction with the functional IL-22R complex and blocks the activity of IL22 (in vitro). May play an important role as an IL22 antagonist in the regulation of inflammatory responses. Isoform 1 may play a role in establishing and maintaining successful pregnancy. The polypeptide is Interleukin-22 receptor subunit alpha-2 (IL22RA2) (Homo sapiens (Human)).